A 484-amino-acid polypeptide reads, in one-letter code: Deoxyribodipyrimidine photo-lyase (484 aa).

Residues 3 to 132 form the Photolyase/cryptochrome alpha/beta domain; the sequence is APILFWHRRD…RAVQLWDQLL (130 aa). Residues 36-38, Arg51, and 101-109 contribute to the coenzyme F420-(gamma-Glu)n site; these read CLD and DIEPYGRDR. Residues 141–148 are DNA-binding; that stretch reads GSGNPYSV. Tyr228 contributes to the FAD binding site. Arg232 contributes to the DNA binding site. 240-247 contributes to the FAD binding site; it reads TSGLSPAL. Lys248 is a coenzyme F420-(gamma-Glu)n binding site. 2 interaction with DNA regions span residues 283–290 and 349–350; these read ELAWREFY and NR. FAD contacts are provided by residues 346–352, 380–382, and Asn386; these read WMHNRCW and DGD. 2 residues coordinate DNA: Gln411 and Lys472.

This sequence belongs to the DNA photolyase class-1 family. Monomer. FAD serves as cofactor. The cofactor is coenzyme F420-(gamma-Glu)n.

It carries out the reaction cyclobutadipyrimidine (in DNA) = 2 pyrimidine residues (in DNA).. In terms of biological role, involved in repair of UV radiation-induced DNA damage. Catalyzes the light-dependent monomerization (300-600 nm) of cyclobutyl pyrimidine dimers (in cis-syn configuration), which are formed between adjacent bases on the same DNA strand upon exposure to ultraviolet radiation. This chain is Deoxyribodipyrimidine photo-lyase (phr), found in Synechococcus sp. (strain ATCC 27144 / PCC 6301 / SAUG 1402/1) (Anacystis nidulans).